The sequence spans 402 residues: Arginine deiminase (402 aa).

Cysteine 391 serves as the catalytic Amidino-cysteine intermediate.

This sequence belongs to the arginine deiminase family.

It is found in the cytoplasm. The catalysed reaction is L-arginine + H2O = L-citrulline + NH4(+). It participates in amino-acid degradation; L-arginine degradation via ADI pathway; carbamoyl phosphate from L-arginine: step 1/2. The chain is Arginine deiminase from Mycobacterium marinum (strain ATCC BAA-535 / M).